Reading from the N-terminus, the 510-residue chain is Amidophosphoribosyltransferase (510 aa).

The active-site Nucleophile is Cys-2. The region spanning 2-239 is the Glutamine amidotransferase type-2 domain; it reads CGILGIALAD…PGEAVIIPKD (238 aa). The Mg(2+) site is built by Asp-373 and Asp-374.

The protein in the C-terminal section; belongs to the purine/pyrimidine phosphoribosyltransferase family. It depends on Mg(2+) as a cofactor.

The catalysed reaction is 5-phospho-beta-D-ribosylamine + L-glutamate + diphosphate = 5-phospho-alpha-D-ribose 1-diphosphate + L-glutamine + H2O. It participates in purine metabolism; IMP biosynthesis via de novo pathway; N(1)-(5-phospho-D-ribosyl)glycinamide from 5-phospho-alpha-D-ribose 1-diphosphate: step 1/2. The chain is Amidophosphoribosyltransferase (ADE4) from Lachancea kluyveri (Yeast).